The sequence spans 277 residues: Acetyl-coenzyme A carboxylase carboxyl transferase subunit beta (277 aa).

The 256-residue stretch at 22 to 277 (LWTKCPGCNR…TLKQLLYFLT (256 aa)) folds into the CoA carboxyltransferase N-terminal domain. Positions 26, 29, 45, and 48 each coordinate Zn(2+). The C4-type zinc-finger motif lies at 26–48 (CPGCNRFLYTKELELNQSVCHYC).

This sequence belongs to the AccD/PCCB family. In terms of assembly, acetyl-CoA carboxylase is a heterohexamer composed of biotin carboxyl carrier protein (AccB), biotin carboxylase (AccC) and two subunits each of ACCase subunit alpha (AccA) and ACCase subunit beta (AccD). Requires Zn(2+) as cofactor.

The protein localises to the cytoplasm. The catalysed reaction is N(6)-carboxybiotinyl-L-lysyl-[protein] + acetyl-CoA = N(6)-biotinyl-L-lysyl-[protein] + malonyl-CoA. It participates in lipid metabolism; malonyl-CoA biosynthesis; malonyl-CoA from acetyl-CoA: step 1/1. Component of the acetyl coenzyme A carboxylase (ACC) complex. Biotin carboxylase (BC) catalyzes the carboxylation of biotin on its carrier protein (BCCP) and then the CO(2) group is transferred by the transcarboxylase to acetyl-CoA to form malonyl-CoA. The polypeptide is Acetyl-coenzyme A carboxylase carboxyl transferase subunit beta (Methylacidiphilum infernorum (isolate V4) (Methylokorus infernorum (strain V4))).